Consider the following 378-residue polypeptide: Lipid-A-disaccharide synthase (378 aa).

It belongs to the LpxB family.

The enzyme catalyses a lipid X + a UDP-2-N,3-O-bis[(3R)-3-hydroxyacyl]-alpha-D-glucosamine = a lipid A disaccharide + UDP + H(+). It functions in the pathway bacterial outer membrane biogenesis; LPS lipid A biosynthesis. Its function is as follows. Condensation of UDP-2,3-diacylglucosamine and 2,3-diacylglucosamine-1-phosphate to form lipid A disaccharide, a precursor of lipid A, a phosphorylated glycolipid that anchors the lipopolysaccharide to the outer membrane of the cell. The polypeptide is Lipid-A-disaccharide synthase (Pseudomonas aeruginosa (strain LESB58)).